A 200-amino-acid chain; its full sequence is Recombination protein RecR (200 aa).

The segment at 57 to 72 (CEHCRTFTEEDICSIC) adopts a C4-type zinc-finger fold. In terms of domain architecture, Toprim spans 81–176 (RLLCVVEMPA…KVSRIAHGIP (96 aa)).

Belongs to the RecR family.

In terms of biological role, may play a role in DNA repair. It seems to be involved in an RecBC-independent recombinational process of DNA repair. It may act with RecF and RecO. This Mannheimia succiniciproducens (strain KCTC 0769BP / MBEL55E) protein is Recombination protein RecR.